Here is a 150-residue protein sequence, read N- to C-terminus: uncharacterized protein (150 aa).

Residues 5-66 (LDKVDRRLLE…KPNYKKLNLG (62 aa)) form the HTH asnC-type domain. Positions 24 to 43 (IATLSKKLGIPRTTVHYRIK) form a DNA-binding region, H-T-H motif.

This is an uncharacterized protein from Pyrococcus abyssi (strain GE5 / Orsay).